The primary structure comprises 89 residues: Small ribosomal subunit protein uS15 (89 aa).

This sequence belongs to the universal ribosomal protein uS15 family. Part of the 30S ribosomal subunit. Forms a bridge to the 50S subunit in the 70S ribosome, contacting the 23S rRNA.

One of the primary rRNA binding proteins, it binds directly to 16S rRNA where it helps nucleate assembly of the platform of the 30S subunit by binding and bridging several RNA helices of the 16S rRNA. In terms of biological role, forms an intersubunit bridge (bridge B4) with the 23S rRNA of the 50S subunit in the ribosome. This Baumannia cicadellinicola subsp. Homalodisca coagulata protein is Small ribosomal subunit protein uS15.